A 585-amino-acid polypeptide reads, in one-letter code: Arginine--tRNA ligase (585 aa).

The short motif at 131–141 (ANPTGPMHVGH) is the 'HIGH' region element.

This sequence belongs to the class-I aminoacyl-tRNA synthetase family. Monomer.

Its subcellular location is the cytoplasm. The enzyme catalyses tRNA(Arg) + L-arginine + ATP = L-arginyl-tRNA(Arg) + AMP + diphosphate. The sequence is that of Arginine--tRNA ligase from Bartonella quintana (strain Toulouse) (Rochalimaea quintana).